A 68-amino-acid polypeptide reads, in one-letter code: MAMTNEEKVLAIREKLNIVNQGLLDPEKYKNANEEELTDIYDFVQSRERLSPSEVTAIADALGQLRHD.

This sequence belongs to the UPF0435 family.

This is UPF0435 protein SA1696 from Staphylococcus aureus (strain N315).